Here is a 332-residue protein sequence, read N- to C-terminus: Tyrosine--tRNA ligase (332 aa).

5 residues coordinate L-tyrosine: Tyr-32, Tyr-156, Gln-160, Asp-163, and Gln-178. Residues 219–223 carry the 'KMSKS' region motif; it reads KMSKS. Residue Lys-222 coordinates ATP.

It belongs to the class-I aminoacyl-tRNA synthetase family. TyrS type 4 subfamily. As to quaternary structure, homodimer.

Its subcellular location is the cytoplasm. It catalyses the reaction tRNA(Tyr) + L-tyrosine + ATP = L-tyrosyl-tRNA(Tyr) + AMP + diphosphate + H(+). Catalyzes the attachment of tyrosine to tRNA(Tyr) in a two-step reaction: tyrosine is first activated by ATP to form Tyr-AMP and then transferred to the acceptor end of tRNA(Tyr). The protein is Tyrosine--tRNA ligase of Thermoplasma acidophilum (strain ATCC 25905 / DSM 1728 / JCM 9062 / NBRC 15155 / AMRC-C165).